Reading from the N-terminus, the 1226-residue chain is Chromosome-associated kinesin KIF4 (1226 aa).

Positions 8-337 (PVRVALRCRP…LRYADRARKI (330 aa)) constitute a Kinesin motor domain. Residue 87-94 (GQTGSGKT) participates in ATP binding. The stretch at 351-1006 (ELQRLKLQVQ…YKQKLALLHV (656 aa)) forms a coiled coil. Acidic residues predominate over residues 494-505 (EAASFPVPEEDS). Disordered stretches follow at residues 494 to 516 (EAASFPVPEEDSGEKRSSDGFTT), 722 to 741 (QRQKEAMEKRKDSQSKGMEG), and 1052 to 1078 (DLLSESESEEESDDKNWEPGNNSKQSK). Residues 722-735 (QRQKEAMEKRKDSQ) are compositionally biased toward basic and acidic residues. The tract at residues 1007–1226 (ASGKKLHNIL…SGCSAITEDE (220 aa)) is globular. Over residues 1053–1064 (LLSESESEEESD) the composition is skewed to acidic residues.

Belongs to the TRAFAC class myosin-kinesin ATPase superfamily. Kinesin family. Chromokinesin subfamily. The cofactor is [2Fe-2S] cluster. It depends on [4Fe-4S] cluster as a cofactor. As to expression, expressed in oocytes, eggs, testes and brain.

It localises to the nucleus. The protein resides in the chromosome. The protein localises to the cytoplasm. Its subcellular location is the cytoskeleton. In terms of biological role, iron-sulfur (Fe-S) cluster binding motor protein that has a role in chromosome segregation during mitosis. Required for mitotic chromosomal positioning and bipolar spindle stabilization. In Xenopus laevis (African clawed frog), this protein is Chromosome-associated kinesin KIF4 (kif4).